The chain runs to 161 residues: MTKKSASSNNKVVATNRKARHNYTILDTYEAGIVLMGTEVKSLREGQASLADAFATVDDGEIWLRNVHIAEYHHGTWTNHAPRRNRKLLLHRKQIDNLIGKIRDGNLTLVPLSIYFTDGKVKVELALARGKQAHDKRQDLARRDAQREVIRELGRRAKGKI.

Belongs to the SmpB family.

Its subcellular location is the cytoplasm. Required for rescue of stalled ribosomes mediated by trans-translation. Binds to transfer-messenger RNA (tmRNA), required for stable association of tmRNA with ribosomes. tmRNA and SmpB together mimic tRNA shape, replacing the anticodon stem-loop with SmpB. tmRNA is encoded by the ssrA gene; the 2 termini fold to resemble tRNA(Ala) and it encodes a 'tag peptide', a short internal open reading frame. During trans-translation Ala-aminoacylated tmRNA acts like a tRNA, entering the A-site of stalled ribosomes, displacing the stalled mRNA. The ribosome then switches to translate the ORF on the tmRNA; the nascent peptide is terminated with the 'tag peptide' encoded by the tmRNA and targeted for degradation. The ribosome is freed to recommence translation, which seems to be the essential function of trans-translation. In Mycolicibacterium smegmatis (strain ATCC 700084 / mc(2)155) (Mycobacterium smegmatis), this protein is SsrA-binding protein.